The sequence spans 328 residues: Ferredoxin--NADP reductase 1 (328 aa).

Residues D28, Q36, Y41, A81, I116, D277, and S320 each coordinate FAD.

It belongs to the ferredoxin--NADP reductase type 2 family. In terms of assembly, homodimer. FAD serves as cofactor.

It carries out the reaction 2 reduced [2Fe-2S]-[ferredoxin] + NADP(+) + H(+) = 2 oxidized [2Fe-2S]-[ferredoxin] + NADPH. The chain is Ferredoxin--NADP reductase 1 from Sulfolobus acidocaldarius (strain ATCC 33909 / DSM 639 / JCM 8929 / NBRC 15157 / NCIMB 11770).